The primary structure comprises 1036 residues: uncharacterized protein (1036 aa).

A signal peptide spans 1-24 (MKRVGLIGVIMAALLVISATPVMA). The chain crosses the membrane as a helical span at residues 1011–1033 (GGGVPGFEAVFAIAGLLAVAYLL).

Its subcellular location is the membrane. This is an uncharacterized protein from Archaeoglobus fulgidus (strain ATCC 49558 / DSM 4304 / JCM 9628 / NBRC 100126 / VC-16).